Here is a 78-residue protein sequence, read N- to C-terminus: Putative antitoxin PF1222 (78 aa).

It belongs to the UPF0330 family.

Possibly the antitoxin component of a type II toxin-antitoxin (TA) system. The protein is Putative antitoxin PF1222 of Pyrococcus furiosus (strain ATCC 43587 / DSM 3638 / JCM 8422 / Vc1).